The following is a 594-amino-acid chain: (-)-endo-fenchol synthase, chloroplastic (594 aa).

The transit peptide at 1–50 (MSSLVMHVGIVNKPAITYLPTLSRRASNLHNVSSTRLQTSCSLQLDYKPV) directs the protein to the chloroplast. Mg(2+) is bound by residues Asp348, Asp352, Asp492, and Glu500. Positions 348-352 (DDIYD) match the DDXXD motif motif.

This sequence belongs to the terpene synthase family. Tpsa subfamily. Mg(2+) is required as a cofactor. Requires Mn(2+) as cofactor. In terms of tissue distribution, expressed at low levels in leaves.

The protein resides in the plastid. Its subcellular location is the chloroplast. It catalyses the reaction (2E)-geranyl diphosphate = alpha-pinene + diphosphate. It carries out the reaction (2E)-geranyl diphosphate + H2O = (1S,2S,4R)-endo-fenchol + diphosphate. The enzyme catalyses (2E)-geranyl diphosphate = limonene + diphosphate. It functions in the pathway secondary metabolite biosynthesis; terpenoid biosynthesis. In terms of biological role, monoterpene synthase involved in the biosynthesis of volatile compounds widely used in aromatherapy and folk medicine, and present in culinary herbs. Mediates the conversion of (2E)-geranyl diphosphate (GPP) into alpha fenchol, limonene and alpha-pinene and, as minor compounds, into beta-myrcene, alpha-terpinolene and alpha-phellandrene. The polypeptide is (-)-endo-fenchol synthase, chloroplastic (Lavandula stoechas (Butterfly lavender)).